We begin with the raw amino-acid sequence, 157 residues long: UPF0225 protein PSPPH_1399 (157 aa).

Belongs to the UPF0225 family.

The sequence is that of UPF0225 protein PSPPH_1399 from Pseudomonas savastanoi pv. phaseolicola (strain 1448A / Race 6) (Pseudomonas syringae pv. phaseolicola (strain 1448A / Race 6)).